Here is a 110-residue protein sequence, read N- to C-terminus: Small ribosomal subunit protein uS10 (110 aa).

Belongs to the universal ribosomal protein uS10 family. As to quaternary structure, part of the 30S ribosomal subunit.

In terms of biological role, involved in the binding of tRNA to the ribosomes. In Coxiella burnetii (strain Dugway 5J108-111), this protein is Small ribosomal subunit protein uS10.